Here is an 804-residue protein sequence, read N- to C-terminus: Ral guanine nucleotide dissociation stimulator-like 1 (804 aa).

The 131-residue stretch at 101-231 (KIRSIRAGTL…RAQSLLEQLR (131 aa)) folds into the N-terminal Ras-GEF domain. The 270-residue stretch at 270-539 (EVDLVAEQLT…YVLSCEVEGL (270 aa)) folds into the Ras-GEF domain. Disordered stretches follow at residues 564–611 (NDST…TPTH) and 640–676 (SASISLASPTLPGPPCNHRRSISLTPLMSPTSPGFPP). Composition is skewed to low complexity over residues 581-607 (PTGSSGESMDSVSVSSSDSSPSESDGM) and 640-649 (SASISLASPT). Positions 661 to 671 (ISLTPLMSPTS) are enriched in polar residues. Positions 684-771 (DACIIRVSLE…FDFLLRLRGS (88 aa)) constitute a Ras-associating domain.

Functionally, probable guanine nucleotide exchange factor. The chain is Ral guanine nucleotide dissociation stimulator-like 1 (rgl1) from Danio rerio (Zebrafish).